We begin with the raw amino-acid sequence, 101 residues long: Large ribosomal subunit protein bL28 (101 aa).

It belongs to the bacterial ribosomal protein bL28 family.

This chain is Large ribosomal subunit protein bL28, found in Rhodopseudomonas palustris (strain BisB18).